The chain runs to 139 residues: ATP synthase epsilon chain (139 aa).

The protein belongs to the ATPase epsilon chain family. As to quaternary structure, F-type ATPases have 2 components, CF(1) - the catalytic core - and CF(0) - the membrane proton channel. CF(1) has five subunits: alpha(3), beta(3), gamma(1), delta(1), epsilon(1). CF(0) has three main subunits: a, b and c.

It localises to the cell inner membrane. Its function is as follows. Produces ATP from ADP in the presence of a proton gradient across the membrane. The polypeptide is ATP synthase epsilon chain (Pseudomonas putida (strain ATCC 700007 / DSM 6899 / JCM 31910 / BCRC 17059 / LMG 24140 / F1)).